The primary structure comprises 164 residues: 6,7-dimethyl-8-ribityllumazine synthase (164 aa).

5-amino-6-(D-ribitylamino)uracil is bound by residues phenylalanine 24, 62-64 (SFE), and 86-88 (AVI). 91–92 (QT) contacts (2S)-2-hydroxy-3-oxobutyl phosphate. Histidine 94 serves as the catalytic Proton donor. Phenylalanine 119 provides a ligand contact to 5-amino-6-(D-ribitylamino)uracil. Arginine 133 contacts (2S)-2-hydroxy-3-oxobutyl phosphate.

It belongs to the DMRL synthase family.

It catalyses the reaction (2S)-2-hydroxy-3-oxobutyl phosphate + 5-amino-6-(D-ribitylamino)uracil = 6,7-dimethyl-8-(1-D-ribityl)lumazine + phosphate + 2 H2O + H(+). It functions in the pathway cofactor biosynthesis; riboflavin biosynthesis; riboflavin from 2-hydroxy-3-oxobutyl phosphate and 5-amino-6-(D-ribitylamino)uracil: step 1/2. Functionally, catalyzes the formation of 6,7-dimethyl-8-ribityllumazine by condensation of 5-amino-6-(D-ribitylamino)uracil with 3,4-dihydroxy-2-butanone 4-phosphate. This is the penultimate step in the biosynthesis of riboflavin. This Synechocystis sp. (strain ATCC 27184 / PCC 6803 / Kazusa) protein is 6,7-dimethyl-8-ribityllumazine synthase.